Reading from the N-terminus, the 131-residue chain is Small ribosomal subunit protein uS12 (131 aa).

Asp-89 carries the 3-methylthioaspartic acid modification. Positions 106-131 are disordered; the sequence is GVDGRKQGRSKYGAKKAKVAKTASAK. Over residues 112 to 124 the composition is skewed to basic residues; sequence QGRSKYGAKKAKV.

It belongs to the universal ribosomal protein uS12 family. As to quaternary structure, part of the 30S ribosomal subunit. Contacts proteins S8 and S17. May interact with IF1 in the 30S initiation complex.

Functionally, with S4 and S5 plays an important role in translational accuracy. Interacts with and stabilizes bases of the 16S rRNA that are involved in tRNA selection in the A site and with the mRNA backbone. Located at the interface of the 30S and 50S subunits, it traverses the body of the 30S subunit contacting proteins on the other side and probably holding the rRNA structure together. The combined cluster of proteins S8, S12 and S17 appears to hold together the shoulder and platform of the 30S subunit. This is Small ribosomal subunit protein uS12 from Endomicrobium trichonymphae.